Here is a 512-residue protein sequence, read N- to C-terminus: Gamma-aminobutyric acid receptor subunit beta-2 (512 aa).

An N-terminal signal peptide occupies residues 1–25; it reads MWRVRKRGYFGIWSFPLIIAAVCAQ. Residues 26-241 lie on the Extracellular side of the membrane; that stretch reads SVNDPSNMSL…LSLSFKLKRN (216 aa). 2 N-linked (GlcNAc...) asparagine glycosylation sites follow: N32 and N104. A histamine-binding site is contributed by Y121. C160 and C174 are joined by a disulfide. N-linked (GlcNAc...) asparagine glycosylation is present at N173. Residues 180–181 and T226 each bind histamine; that span reads SY. 2 residues coordinate 4-aminobutanoate: Y181 and T226. Residues 242-262 traverse the membrane as a helical segment; sequence IGYFILQTYMPSILITILSWV. Residues 263-272 are Cytoplasmic-facing; the sequence is SFWINYDASA. A helical transmembrane segment spans residues 273-292; that stretch reads ARVALGITTVLTMTTINTHL. At 293–310 the chain is on the extracellular side; that stretch reads RETLPKIPYVKAIDMYLM. Residues 311–331 traverse the membrane as a helical segment; the sequence is GCFVFVFMALLEYALVNYIFF. The Cytoplasmic portion of the chain corresponds to 332 to 490; it reads GRGPQRQKKA…LTDVNAIDRW (159 aa). Y441 bears the Phosphotyrosine mark. A helical membrane pass occupies residues 491–511; the sequence is SRIFFPVVFSFFNIVYWLYYV. A topological domain (extracellular) is located at residue N512.

The protein belongs to the ligand-gated ion channel (TC 1.A.9) family. Gamma-aminobutyric acid receptor (TC 1.A.9.5) subfamily. GABRB2 sub-subfamily. As to quaternary structure, heteropentamer, formed by a combination of alpha (GABRA1-6), beta (GABRB1-3), gamma (GABRG1-3), delta (GABRD), epsilon (GABRE), rho (GABRR1-3), pi (GABRP) and theta (GABRQ) chains, each subunit exhibiting distinct physiological and pharmacological properties. Interacts with UBQLN1. May interact with KIF21B. Identified in a complex of 720 kDa composed of LHFPL4, NLGN2, GABRA1, GABRB2, GABRG2 and GABRB3. Isoform 1 and isoform 2 show reduced expression in schizophrenic brain. Isoform 3 shows increased expression in schizophrenic and bipolar disorder brains while isoform 4 shows reduced expression.

It is found in the postsynaptic cell membrane. The protein localises to the cell membrane. The protein resides in the cytoplasmic vesicle membrane. It carries out the reaction chloride(in) = chloride(out). With respect to regulation, allosterically activated by benzodiazepines. Allosterically activated by the anesthetic etomidate. Inhibited by the antagonist bicuculline. Potentiated by histamine. In terms of biological role, beta subunit of the heteropentameric ligand-gated chloride channel gated by gamma-aminobutyric acid (GABA), a major inhibitory neurotransmitter in the brain. GABA-gated chloride channels, also named GABA(A) receptors (GABAAR), consist of five subunits arranged around a central pore and contain GABA active binding site(s) located at the alpha and beta subunit interface(s). When activated by GABA, GABAARs selectively allow the flow of chloride anions across the cell membrane down their electrochemical gradient. Chloride influx into the postsynaptic neuron following GABAAR opening decreases the neuron ability to generate a new action potential, thereby reducing nerve transmission. GABAARs containing alpha-1 and beta-2 or -3 subunits exhibit synaptogenic activity; the gamma-2 subunit being necessary but not sufficient to induce rapid synaptic contacts formation. Extrasynaptic beta-2 receptors contribute to the tonic GABAergic inhibition. Beta-containing GABAARs can simultaneously bind GABA and histamine where histamine binds at the interface of two neighboring beta subunits, which may be involved in the regulation of sleep and wakefulness. The polypeptide is Gamma-aminobutyric acid receptor subunit beta-2 (Homo sapiens (Human)).